The following is a 487-amino-acid chain: N-succinylglutamate 5-semialdehyde dehydrogenase (487 aa).

Residue 221 to 226 coordinates NAD(+); the sequence is GSSRTG. Catalysis depends on residues glutamate 244 and cysteine 278.

This sequence belongs to the aldehyde dehydrogenase family. AstD subfamily.

The catalysed reaction is N-succinyl-L-glutamate 5-semialdehyde + NAD(+) + H2O = N-succinyl-L-glutamate + NADH + 2 H(+). Its pathway is amino-acid degradation; L-arginine degradation via AST pathway; L-glutamate and succinate from L-arginine: step 4/5. In terms of biological role, catalyzes the NAD-dependent reduction of succinylglutamate semialdehyde into succinylglutamate. The polypeptide is N-succinylglutamate 5-semialdehyde dehydrogenase (Pseudomonas putida (strain GB-1)).